The sequence spans 61 residues: Large ribosomal subunit protein uL30 (61 aa).

It belongs to the universal ribosomal protein uL30 family. Part of the 50S ribosomal subunit.

This chain is Large ribosomal subunit protein uL30, found in Bordetella petrii (strain ATCC BAA-461 / DSM 12804 / CCUG 43448).